Consider the following 512-residue polypeptide: 2-isopropylmalate synthase (512 aa).

The region spanning 4-266 is the Pyruvate carboxyltransferase domain; sequence IQFFDTTLRD…ETNIVLNQFK (263 aa). Residues aspartate 13, histidine 201, histidine 203, and asparagine 237 each coordinate Mn(2+). The segment at 390–512 is regulatory domain; the sequence is ELKHLQVQYV…TKQVDFEEVK (123 aa).

This sequence belongs to the alpha-IPM synthase/homocitrate synthase family. LeuA type 1 subfamily. As to quaternary structure, homodimer. The cofactor is Mn(2+).

It is found in the cytoplasm. It catalyses the reaction 3-methyl-2-oxobutanoate + acetyl-CoA + H2O = (2S)-2-isopropylmalate + CoA + H(+). It participates in amino-acid biosynthesis; L-leucine biosynthesis; L-leucine from 3-methyl-2-oxobutanoate: step 1/4. Functionally, catalyzes the condensation of the acetyl group of acetyl-CoA with 3-methyl-2-oxobutanoate (2-ketoisovalerate) to form 3-carboxy-3-hydroxy-4-methylpentanoate (2-isopropylmalate). The polypeptide is 2-isopropylmalate synthase (Listeria welshimeri serovar 6b (strain ATCC 35897 / DSM 20650 / CCUG 15529 / CIP 8149 / NCTC 11857 / SLCC 5334 / V8)).